A 193-amino-acid polypeptide reads, in one-letter code: Histone H5 (193 aa).

The segment covering 1 to 11 (TDSPIPAPAPA) has biased composition (pro residues). Disordered stretches follow at residues 1–29 (TDSPIPAPAPAAKPKRARAPRKPASHPTY) and 80–193 (GVLK…PKKK). Residues 13-24 (KPKRARAPRKPA) are compositionally biased toward basic residues. In terms of domain architecture, H15 spans 25 to 98 (SHPTYSEMIA…GASGSFRLAK (74 aa)). Basic residues predominate over residues 104–193 (RSPAGRKKKK…SGARKSPKKK (90 aa)).

It belongs to the histone H1/H5 family. In terms of tissue distribution, erythroid cells.

The protein resides in the nucleus. It is found in the chromosome. Functionally, histone H5 performs the same function as H1, being necessary for the condensation of nucleosome chains into higher order structures, and replaces histone H1 in certain cells. The protein is Histone H5 of Anser anser anser (Western greylag goose).